A 308-amino-acid polypeptide reads, in one-letter code: Phosphoribosylaminoimidazole-succinocarboxamide synthase (308 aa).

Belongs to the SAICAR synthetase family.

The catalysed reaction is 5-amino-1-(5-phospho-D-ribosyl)imidazole-4-carboxylate + L-aspartate + ATP = (2S)-2-[5-amino-1-(5-phospho-beta-D-ribosyl)imidazole-4-carboxamido]succinate + ADP + phosphate + 2 H(+). It functions in the pathway purine metabolism; IMP biosynthesis via de novo pathway; 5-amino-1-(5-phospho-D-ribosyl)imidazole-4-carboxamide from 5-amino-1-(5-phospho-D-ribosyl)imidazole-4-carboxylate: step 1/2. This is Phosphoribosylaminoimidazole-succinocarboxamide synthase from Xanthomonas oryzae pv. oryzae (strain PXO99A).